Reading from the N-terminus, the 313-residue chain is HTH-type transcriptional regulator CysB (313 aa).

An HTH lysR-type domain is found at 1–59 (MNLHQFRFVREAVRQNFNLTEAAKALYTSQPGVSKAIIELEDELGVEIFTRHGKRVRSL). A DNA-binding region (H-T-H motif) is located at residues 19–38 (LTEAAKALYTSQPGVSKAII).

It belongs to the LysR transcriptional regulatory family.

Transcriptional regulator preferentially involved in the control of sulfate transport and reduction. Binds to DNA at target promoter regions. The polypeptide is HTH-type transcriptional regulator CysB (Burkholderia cenocepacia (strain ATCC BAA-245 / DSM 16553 / LMG 16656 / NCTC 13227 / J2315 / CF5610) (Burkholderia cepacia (strain J2315))).